We begin with the raw amino-acid sequence, 285 residues long: V-set and transmembrane domain-containing protein 2B (285 aa).

Residues 1–28 (MEQRNRLGALGYLLPLLLHSLLLFVADA) form the signal peptide. The Ig-like V-type domain occupies 29–143 (TFTEVPKDVT…DDDTQEHKAQ (115 aa)). The Extracellular portion of the chain corresponds to 29 to 263 (TFTEVPKDVT…HGSGTGPGYS (235 aa)). C49 and C127 form a disulfide bridge. Positions 160 to 225 (AEAVSHIQSS…AAAAAASATH (66 aa)) are disordered. Composition is skewed to low complexity over residues 176 to 189 (ASSA…GAAV) and 208 to 225 (PAGS…SATH). A helical transmembrane segment spans residues 264 to 284 (ADPLLSLLLLALHKFLHPLLG). Position 285 (H285) is a topological domain, cytoplasmic.

It localises to the membrane. The polypeptide is V-set and transmembrane domain-containing protein 2B (Vstm2b) (Mus musculus (Mouse)).